A 202-amino-acid chain; its full sequence is Ribosome maturation factor RimP (202 aa).

The protein belongs to the RimP family.

The protein resides in the cytoplasm. Its function is as follows. Required for maturation of 30S ribosomal subunits. The protein is Ribosome maturation factor RimP of Paracidovorax citrulli (strain AAC00-1) (Acidovorax citrulli).